Reading from the N-terminus, the 367-residue chain is Voltage-gated potassium channel subunit beta-2 (367 aa).

Residues threonine 56, tryptophan 57, glutamine 63, and aspartate 85 each coordinate NADP(+). The active-site Proton donor/acceptor is tyrosine 90. NADP(+) is bound by residues asparagine 158, serine 188, arginine 189, glutamine 214, tryptophan 243, serine 244, proline 245, leucine 246, alanine 247, cysteine 248, lysine 254, tyrosine 262, arginine 264, glycine 323, serine 325, glutamine 329, glutamate 332, and asparagine 333.

Belongs to the shaker potassium channel beta subunit family. In terms of assembly, forms heteromultimeric complex with alpha subunits.

It is found in the cytoplasm. Its subcellular location is the membrane. The protein resides in the cell membrane. It localises to the cell projection. The protein localises to the axon. It is found in the synapse. Its subcellular location is the synaptosome. The protein resides in the cytoskeleton. In terms of biological role, regulatory subunit of the voltage-gated potassium (Kv) Shaker channels composed of pore-forming and potassium-conducting alpha subunits and of regulatory beta subunits. The beta-2/KCNAB2 cytoplasmic subunit may promote potassium channel closure via a mechanism that does not involve physical obstruction of the channel pore. Enhances current amplitude of Kv1.1/KCNA1 and Kv2.2/KCNA2 channels. May display nicotinamide adenine dinucleotide phosphate (NADPH)-dependent aldoketoreductase activity by catalyzing the NADPH-dependent reduction of a wide range of aldehyde and ketone substrates. The binding of oxidized and reduced nucleotide may alter Kv channel gating and contribute to dynamic fine tuning of cell excitability. This Xenopus laevis (African clawed frog) protein is Voltage-gated potassium channel subunit beta-2 (kcnab2).